A 74-amino-acid chain; its full sequence is Protein krueppel (74 aa).

4 consecutive C2H2-type zinc fingers follow at residues 1–4 (ERTH), 10–32 (FECP…MRLH), 38–60 (YHCS…LRVH), and 66–74 (YACELCAAK).

It belongs to the krueppel C2H2-type zinc-finger protein family.

The protein localises to the nucleus. Krueppel is a gap class segmentation protein. This Apis mellifera (Honeybee) protein is Protein krueppel (Kr).